Here is a 180-residue protein sequence, read N- to C-terminus: NADH-quinone oxidoreductase subunit I (180 aa).

2 4Fe-4S ferredoxin-type domains span residues 50–80 and 90–119; these read LTRD…LQKA and EFFR…MTPD. Positions 60, 63, 66, 70, 99, 102, 105, and 109 each coordinate [4Fe-4S] cluster.

The protein belongs to the complex I 23 kDa subunit family. As to quaternary structure, NDH-1 is composed of 14 different subunits. Subunits NuoA, H, J, K, L, M, N constitute the membrane sector of the complex. It depends on [4Fe-4S] cluster as a cofactor.

The protein localises to the cell inner membrane. The enzyme catalyses a quinone + NADH + 5 H(+)(in) = a quinol + NAD(+) + 4 H(+)(out). Functionally, NDH-1 shuttles electrons from NADH, via FMN and iron-sulfur (Fe-S) centers, to quinones in the respiratory chain. The immediate electron acceptor for the enzyme in this species is believed to be ubiquinone. Couples the redox reaction to proton translocation (for every two electrons transferred, four hydrogen ions are translocated across the cytoplasmic membrane), and thus conserves the redox energy in a proton gradient. The protein is NADH-quinone oxidoreductase subunit I of Acinetobacter baylyi (strain ATCC 33305 / BD413 / ADP1).